We begin with the raw amino-acid sequence, 552 residues long: Urocanate hydratase (552 aa).

Residues Gly49–Gly50, Gln127, Gly173–Gly175, Asp193, Asn239–Ala240, Gln260–His264, Tyr270–Val271, and Tyr319 each bind NAD(+). Residue Cys407 is part of the active site. Gly489 contributes to the NAD(+) binding site.

It belongs to the urocanase family. Requires NAD(+) as cofactor.

The protein resides in the cytoplasm. The catalysed reaction is 4-imidazolone-5-propanoate = trans-urocanate + H2O. Its pathway is amino-acid degradation; L-histidine degradation into L-glutamate; N-formimidoyl-L-glutamate from L-histidine: step 2/3. Its function is as follows. Catalyzes the conversion of urocanate to 4-imidazolone-5-propionate. The polypeptide is Urocanate hydratase (Bacillus cytotoxicus (strain DSM 22905 / CIP 110041 / 391-98 / NVH 391-98)).